The sequence spans 187 residues: Protein ECM23 (187 aa).

Disordered stretches follow at residues 106–127 (GKKS…LPNG) and 167–187 (KKIR…FKNK). Residues 126–180 (NGQPKECATCGDTWTSQWRSGPNGNVELCSRCGIAYRKKMEKKIRSQQSSDDGTK) form a GATA-type zinc finger.

Its function is as follows. Involved in morphogenesis. May be involved in cell wall organization and biogenesis. The polypeptide is Protein ECM23 (ECM23) (Saccharomyces cerevisiae (strain ATCC 204508 / S288c) (Baker's yeast)).